The following is a 256-amino-acid chain: Imidazole glycerol phosphate synthase subunit HisF (256 aa).

Active-site residues include aspartate 11 and aspartate 130.

The protein belongs to the HisA/HisF family. Heterodimer of HisH and HisF.

It localises to the cytoplasm. The enzyme catalyses 5-[(5-phospho-1-deoxy-D-ribulos-1-ylimino)methylamino]-1-(5-phospho-beta-D-ribosyl)imidazole-4-carboxamide + L-glutamine = D-erythro-1-(imidazol-4-yl)glycerol 3-phosphate + 5-amino-1-(5-phospho-beta-D-ribosyl)imidazole-4-carboxamide + L-glutamate + H(+). It participates in amino-acid biosynthesis; L-histidine biosynthesis; L-histidine from 5-phospho-alpha-D-ribose 1-diphosphate: step 5/9. Its function is as follows. IGPS catalyzes the conversion of PRFAR and glutamine to IGP, AICAR and glutamate. The HisF subunit catalyzes the cyclization activity that produces IGP and AICAR from PRFAR using the ammonia provided by the HisH subunit. In Prochlorococcus marinus (strain NATL1A), this protein is Imidazole glycerol phosphate synthase subunit HisF.